We begin with the raw amino-acid sequence, 428 residues long: Light-independent protochlorophyllide reductase subunit N (428 aa).

The [4Fe-4S] cluster site is built by Cys31, Cys56, and Cys117.

It belongs to the BchN/ChlN family. Protochlorophyllide reductase is composed of three subunits; BchL, BchN and BchB. Forms a heterotetramer of two BchB and two BchN subunits. Requires [4Fe-4S] cluster as cofactor.

It carries out the reaction chlorophyllide a + oxidized 2[4Fe-4S]-[ferredoxin] + 2 ADP + 2 phosphate = protochlorophyllide a + reduced 2[4Fe-4S]-[ferredoxin] + 2 ATP + 2 H2O. The protein operates within porphyrin-containing compound metabolism; bacteriochlorophyll biosynthesis (light-independent). In terms of biological role, component of the dark-operative protochlorophyllide reductase (DPOR) that uses Mg-ATP and reduced ferredoxin to reduce ring D of protochlorophyllide (Pchlide) to form chlorophyllide a (Chlide). This reaction is light-independent. The NB-protein (BchN-BchB) is the catalytic component of the complex. This is Light-independent protochlorophyllide reductase subunit N from Rhodopseudomonas palustris (strain HaA2).